Here is a 170-residue protein sequence, read N- to C-terminus: RxLR effector protein PITG_07555 (170 aa).

The first 17 residues, methionine 1–alanine 17, serve as a signal peptide directing secretion. Positions arginine 50 to arginine 62 match the RxLR-dEER motif.

It belongs to the RxLR effector family.

The protein localises to the secreted. It is found in the host cytoplasm. Its subcellular location is the host nucleus. In terms of biological role, effector that enhances P.infestans colonization of Nicotiana benthamiana leaves. The sequence is that of RxLR effector protein PITG_07555 from Phytophthora infestans (strain T30-4) (Potato late blight agent).